The primary structure comprises 68 residues: Large ribosomal subunit protein uL30 (68 aa).

The protein belongs to the universal ribosomal protein uL30 family. As to quaternary structure, part of the 50S ribosomal subunit.

The polypeptide is Large ribosomal subunit protein uL30 (Paenarthrobacter aurescens (strain TC1)).